The following is a 109-amino-acid chain: MANHNSSRHTIILLQNSPSRATRTFMDYDSIGQAMDGICGLYERKLKEINPSLRNISYDIADLYNFIDGLADLSALVYDHSISAYLPYDRQWIKQKAFHHLKRIANGGR.

Belongs to the E(R) family. Homodimer.

Its function is as follows. May have a role in the cell cycle. The protein is Enhancer of rudimentary homolog of Arabidopsis thaliana (Mouse-ear cress).